Reading from the N-terminus, the 201-residue chain is Peroxiredoxin 2 (201 aa).

A Thioredoxin domain is found at 3–156 (VYLGKRAPDF…ILRSVKALQA (154 aa)). Cys44 (cysteine sulfenic acid (-SOH) intermediate) is an active-site residue. Arg119 lines the substrate pocket.

Belongs to the peroxiredoxin family. Prx6 subfamily. As to quaternary structure, homodecamer. Pentamer of dimers that assemble into a ring structure.

The protein localises to the cytoplasm. It catalyses the reaction a hydroperoxide + [thioredoxin]-dithiol = an alcohol + [thioredoxin]-disulfide + H2O. Its function is as follows. Thiol-specific peroxidase that catalyzes the reduction of hydrogen peroxide and organic hydroperoxides to water and alcohols, respectively. Plays a role in cell protection against oxidative stress by detoxifying peroxides. The polypeptide is Peroxiredoxin 2 (Picrophilus torridus (strain ATCC 700027 / DSM 9790 / JCM 10055 / NBRC 100828 / KAW 2/3)).